A 215-amino-acid chain; its full sequence is MSKIYDWFEERLEIQAIADDITSKYVPPHVNIFYCFGGITLTCFLIQVATGFAMTFYYRPTVTEAFASVEYIMTNVNFGWLIRSIHRWSASMMVMMLILHVFRVYLTGGFKKPRELTWVTGVILAVITVSFGVTGYSLPWDQVGYWAVKIVTGVPDAIPVIGAPLVELLRGSVSVGQSTLTRFYSLHTFVLPLLTAVFMLMHFLMIRKQGISGPL.

Residues 32 to 52 form a helical membrane-spanning segment; it reads IFYCFGGITLTCFLIQVATGF. Cys-35 is a binding site for heme c. Heme b is bound by residues His-86 and His-100. The next 3 membrane-spanning stretches (helical) occupy residues 90–110, 116–136, and 186–206; these read ASMM…TGGF, LTWV…VTGY, and LHTF…FLMI. 2 residues coordinate heme b: His-187 and His-202.

Belongs to the cytochrome b family. PetB subfamily. In terms of assembly, the 4 large subunits of the cytochrome b6-f complex are cytochrome b6, subunit IV (17 kDa polypeptide, PetD), cytochrome f and the Rieske protein, while the 4 small subunits are PetG, PetL, PetM and PetN. The complex functions as a dimer. Heme b is required as a cofactor. It depends on heme c as a cofactor.

It is found in the plastid. It localises to the chloroplast thylakoid membrane. Functionally, component of the cytochrome b6-f complex, which mediates electron transfer between photosystem II (PSII) and photosystem I (PSI), cyclic electron flow around PSI, and state transitions. In Nephroselmis olivacea (Green alga), this protein is Cytochrome b6.